The sequence spans 142 residues: Small heat shock protein IbpB (142 aa).

The sHSP domain occupies 26 to 137; it reads TGESQSFPPY…APQRIAISER (112 aa).

It belongs to the small heat shock protein (HSP20) family. As to quaternary structure, homodimer. Forms homomultimers of about 100-150 subunits at optimal growth temperatures. Conformation changes to oligomers at high temperatures or high ionic concentrations. The decrease in size of the multimers is accompanied by an increase in chaperone activity.

It localises to the cytoplasm. Associates with aggregated proteins, together with IbpA, to stabilize and protect them from irreversible denaturation and extensive proteolysis during heat shock and oxidative stress. Aggregated proteins bound to the IbpAB complex are more efficiently refolded and reactivated by the ATP-dependent chaperone systems ClpB and DnaK/DnaJ/GrpE. Its activity is ATP-independent. The polypeptide is Small heat shock protein IbpB (Citrobacter koseri (strain ATCC BAA-895 / CDC 4225-83 / SGSC4696)).